We begin with the raw amino-acid sequence, 120 residues long: NAD(P)H-quinone oxidoreductase subunit 3, chloroplastic (120 aa).

3 consecutive transmembrane segments (helical) span residues 9-29 (IFWA…LISG), 64-84 (MFAL…PWAM), and 88-108 (VLGV…IVGS).

This sequence belongs to the complex I subunit 3 family. In terms of assembly, NDH is composed of at least 16 different subunits, 5 of which are encoded in the nucleus.

It localises to the plastid. The protein resides in the chloroplast thylakoid membrane. The enzyme catalyses a plastoquinone + NADH + (n+1) H(+)(in) = a plastoquinol + NAD(+) + n H(+)(out). It catalyses the reaction a plastoquinone + NADPH + (n+1) H(+)(in) = a plastoquinol + NADP(+) + n H(+)(out). In terms of biological role, NDH shuttles electrons from NAD(P)H:plastoquinone, via FMN and iron-sulfur (Fe-S) centers, to quinones in the photosynthetic chain and possibly in a chloroplast respiratory chain. The immediate electron acceptor for the enzyme in this species is believed to be plastoquinone. Couples the redox reaction to proton translocation, and thus conserves the redox energy in a proton gradient. The sequence is that of NAD(P)H-quinone oxidoreductase subunit 3, chloroplastic from Gossypium barbadense (Sea Island cotton).